Reading from the N-terminus, the 233-residue chain is EEF1A lysine methyltransferase 2 (233 aa).

This sequence belongs to the class I-like SAM-binding methyltransferase superfamily. EFM4 family.

Its subcellular location is the cytoplasm. It localises to the nucleus. The enzyme catalyses L-lysyl-[protein] + 3 S-adenosyl-L-methionine = N(6),N(6),N(6)-trimethyl-L-lysyl-[protein] + 3 S-adenosyl-L-homocysteine + 3 H(+). In terms of biological role, protein-lysine methyltransferase that selectively catalyzes the trimethylation of EEF1A at 'Lys-318'. In Danio rerio (Zebrafish), this protein is EEF1A lysine methyltransferase 2.